A 187-amino-acid chain; its full sequence is UPF0301 protein VF_0434 (187 aa).

This sequence belongs to the UPF0301 (AlgH) family.

The polypeptide is UPF0301 protein VF_0434 (Aliivibrio fischeri (strain ATCC 700601 / ES114) (Vibrio fischeri)).